Here is a 193-residue protein sequence, read N- to C-terminus: Potassium-transporting ATPase KdpC subunit (193 aa).

Residues proline 7 to valine 27 traverse the membrane as a helical segment.

It belongs to the KdpC family. In terms of assembly, the system is composed of three essential subunits: KdpA, KdpB and KdpC.

It is found in the cell inner membrane. Functionally, part of the high-affinity ATP-driven potassium transport (or Kdp) system, which catalyzes the hydrolysis of ATP coupled with the electrogenic transport of potassium into the cytoplasm. This subunit acts as a catalytic chaperone that increases the ATP-binding affinity of the ATP-hydrolyzing subunit KdpB by the formation of a transient KdpB/KdpC/ATP ternary complex. The polypeptide is Potassium-transporting ATPase KdpC subunit (Variovorax paradoxus (strain S110)).